Here is a 1225-residue protein sequence, read N- to C-terminus: Clustered mitochondria protein homolog (1225 aa).

A disordered region spans residues M1–N22. The Clu domain maps to Q281 to N532. Disordered stretches follow at residues E577–D605 and A846–A878. TPR repeat units lie at residues A949–T982, I991–I1024, and I1033–L1066. A compositionally biased stretch (polar residues) spans R1153–S1184. The tract at residues R1153–A1225 is disordered.

Belongs to the CLU family. As to quaternary structure, may associate with the eukaryotic translation initiation factor 3 (eIF-3) complex.

The protein localises to the cytoplasm. MRNA-binding protein involved in proper cytoplasmic distribution of mitochondria. The protein is Clustered mitochondria protein homolog of Emericella nidulans (strain FGSC A4 / ATCC 38163 / CBS 112.46 / NRRL 194 / M139) (Aspergillus nidulans).